Reading from the N-terminus, the 178-residue chain is Caveolin-1 (178 aa).

Residue serine 2 is modified to N-acetylserine. Serine 2 bears the Phosphoserine mark. The required for homooligomerization stretch occupies residues 2–94 (SGGKYVDSEG…WKASFTTFTV (93 aa)). Residues 2 to 104 (SGGKYVDSEG…TKYWFYRLLS (103 aa)) are Cytoplasmic-facing. Lysine 5 bears the N6-acetyllysine; alternate mark. Lysine 5 participates in a covalent cross-link: Glycyl lysine isopeptide (Lys-Gly) (interchain with G-Cter in ubiquitin); alternate. Residue tyrosine 6 is modified to Phosphotyrosine. A Phosphoserine modification is found at serine 9. Tyrosine 14 carries the phosphotyrosine; by ABL1 and INSR modification. Position 25 is a phosphotyrosine (tyrosine 25). Glycyl lysine isopeptide (Lys-Gly) (interchain with G-Cter in ubiquitin) cross-links involve residues lysine 26, lysine 30, lysine 39, lysine 47, and lysine 57. Positions 82–94 (DGIWKASFTTFTV) are interaction with CAVIN3. An intramembrane region (helical) is located at residues 105-125 (TIFGIPMALIWGIYFAILSFL). At 126-178 (HIWAVVPCIKSFLIEIQCISRVYSIYVHTFCDPLFEAIGKIFSNIRISTQKEI) the chain is on the cytoplasmic side. The tract at residues 131-142 (VPCIKSFLIEIQ) is interacts with SPRY1, SPRY2, SPRY3 and SPRY4. S-palmitoyl cysteine attachment occurs at residues cysteine 133, cysteine 143, and cysteine 156. Residues 149–160 (SIYVHTFCDPLF) are interacts with SPRY1, SPRY2, and SPRY4. Residues 167-178 (FSNIRISTQKEI) form an interacts with SPRY1, SPRY2, SPRY3 and SPRY4 region.

It belongs to the caveolin family. In terms of assembly, homooligomer. Interacts (via the N-terminus) with DPP4; the interaction is direct. Forms a stable heterooligomeric complex with CAV2 that targets to lipid rafts and drives caveolae formation. Interacts with BMX, BTK, CTNNB1, CDH1, GLIPR2, JUP, NOSTRIN, SNAP25 and STX1A. Interacts with SLC7A9. Interacts with TGFBR1. Interacts with CTNNB1, CDH1 and JUP. Interacts with PACSIN2; this interaction induces membrane tubulation. Interacts with CAVIN3 (via leucine-zipper domain) in a cholesterol-sensitive manner. Interacts with EHD2 in a cholesterol-dependent manner. Interacts with CAVIN1. Forms a ternary complex with UBXN6 and VCP; mediates CAV1 targeting to lysosomes for degradation. Interacts with ABCG1; this interaction regulates ABCG1-mediated cholesterol efflux. Interacts with NEU3; this interaction enhances NEU3 sialidase activity within caveola. Interacts (via C-terminus) with SPRY1, SPRY2 (via C-terminus), SPRY3, and SPRY4. Interacts with IGFBP5; this interaction allows trafficking of IGFBP5 from the plasma membrane to the nucleus. Post-translationally, the N-terminus of both isoforms are blocked. Phosphorylated at Tyr-14 by ABL1 in response to oxidative stress. In terms of processing, ubiquitinated. Undergo monoubiquitination and multi- and/or polyubiquitination. Monoubiquitination of N-terminal lysines promotes integration in a ternary complex with UBXN6 and VCP which promotes oligomeric CAV1 targeting to lysosomes for degradation. Ubiquitinated by ZNRF1; leading to degradation and modulation of the TLR4-mediated immune response. Adipose tissue, lung, heart, skeletal muscle, stomach, small bowel, kidney, spleen and testis (at protein level).

The protein resides in the golgi apparatus membrane. It localises to the cell membrane. Its subcellular location is the membrane. The protein localises to the caveola. It is found in the membrane raft. The protein resides in the golgi apparatus. It localises to the trans-Golgi network. Its function is as follows. May act as a scaffolding protein within caveolar membranes. Forms a stable heterooligomeric complex with CAV2 that targets to lipid rafts and drives caveolae formation. Mediates the recruitment of CAVIN proteins (CAVIN1/2/3/4) to the caveolae. Interacts directly with G-protein alpha subunits and can functionally regulate their activity. Involved in the costimulatory signal essential for T-cell receptor (TCR)-mediated T-cell activation. Its binding to DPP4 induces T-cell proliferation and NF-kappa-B activation in a T-cell receptor/CD3-dependent manner. Recruits CTNNB1 to caveolar membranes and may regulate CTNNB1-mediated signaling through the Wnt pathway. Negatively regulates TGFB1-mediated activation of SMAD2/3 by mediating the internalization of TGFBR1 from membrane rafts leading to its subsequent degradation. Binds 20(S)-hydroxycholesterol (20(S)-OHC). This chain is Caveolin-1 (Cav1), found in Mus musculus (Mouse).